Reading from the N-terminus, the 440-residue chain is MEKLAVLYAEHIATLQQRTRTICEQEGLEGLVIHSGQAKRQFLDDMYYPFKVNPHFKAWLPVIDNPHCWIVVNGSDKPKLIFYRPIDFWHKVPDEPRDFWAEYFDIELLLQPDQVEKLLPYDKAKFAYIGEYLEVAQALGFSIMNPEPVLNYIHYHRAYKTQYELECLRNANRIAVDGHKAARDAFFNGGSEFDIQQAYLMATRQSENEMPYGNIVALNENCAILHYTHFEPKAPQTHNSFLIDAGANFNGYAADITRTYDFKKQGEFADLVNAMTAHQIELGKSLKPGLLYGDLHIDCHNRIAQLLSDFDIVKLPAAEIVERQITSTFFPHGLGHHLGAQVHDVGGFMRDETGAHQAPPEGHPFLRCTRLIEKNQVFTIEPGLYFIDSLLGDLAQTDNKQFINWEKVEAFKPFGGIRIEDNIIVHEDSLENMTRNLLLD.

Mn(2+)-binding residues include Asp244, Asp255, His336, Glu381, and Glu420.

It belongs to the peptidase M24B family. Mn(2+) is required as a cofactor. In terms of processing, the N-terminus is blocked.

The enzyme catalyses Xaa-L-Pro dipeptide + H2O = an L-alpha-amino acid + L-proline. The catalysed reaction is diisopropyl fluorophosphate + H2O = diisopropyl phosphate + fluoride + 2 H(+). Its function is as follows. Splits dipeptides with a prolyl or hydroxyprolyl residue in the C-terminal position and a nonpolar amino acid at the N-terminal position. Also catalyzes the hydrolysis of toxic organophosphorus cholinesterase-inhibiting compounds including nerve gases such as diisopropylfluorophosphate (DFP), O-isopropyl methylphosphonofluoridate (sarin), O-pinacolyl methylphosphonofluoridate (soman), and O-cyclohexyl methylphosphonofluoridate. This Pseudoalteromonas haloplanktis (Alteromonas haloplanktis) protein is Xaa-Pro dipeptidase (pepQ).